The chain runs to 161 residues: GTP-dependent dephospho-CoA kinase (161 aa).

GTP contacts are provided by Asp37, Ile38, Asp56, Lys58, Glu112, and Asp135.

The protein belongs to the GTP-dependent DPCK family.

The catalysed reaction is 3'-dephospho-CoA + GTP = GDP + CoA + H(+). Its pathway is cofactor biosynthesis; coenzyme A biosynthesis. Its function is as follows. Catalyzes the GTP-dependent phosphorylation of the 3'-hydroxyl group of dephosphocoenzyme A to form coenzyme A (CoA). This is GTP-dependent dephospho-CoA kinase from Methanococcus aeolicus (strain ATCC BAA-1280 / DSM 17508 / OCM 812 / Nankai-3).